Reading from the N-terminus, the 328-residue chain is WUSCHEL-related homeobox 6 (328 aa).

Over residues 1 to 11 the composition is skewed to polar residues; the sequence is MEGSSNSPDRQ. Residues 1 to 45 are disordered; the sequence is MEGSSNSPDRQSSGGSPPEERGGGGSGGGGGRSAAGEPVRSRWTP. A compositionally biased stretch (gly residues) spans 23–33; the sequence is GGGSGGGGGRS. Positions 38-102 form a DNA-binding region, homeobox; WUS-type; the sequence is PVRSRWTPKP…NRRSRSRRRQ (65 aa).

Belongs to the WUS homeobox family.

The protein resides in the nucleus. In terms of biological role, transcription factor which may be involved in developmental processes. The sequence is that of WUSCHEL-related homeobox 6 (WOX6) from Oryza sativa subsp. japonica (Rice).